The primary structure comprises 79 residues: Sperm-specific basic nuclear protein SP4 (79 aa).

The disordered stretch occupies residues 1 to 79 (MSKVSGGSRR…ARDYGSDYRS (79 aa)). Over residues 9 to 60 (RRTRARRPMSNRRGRRSQSAAHRSRAQRRRRRTGTTRRARTSTARRARTRTA) the composition is skewed to basic residues. 2 repeats span residues 45 to 52 (RRARTSTA) and 53 to 60 (RRARTRTA). Positions 61 to 79 (RRSDLTRMMARDYGSDYRS) are enriched in basic and acidic residues.

It is found in the nucleus. The chain is Sperm-specific basic nuclear protein SP4 (sp4-a) from Xenopus laevis (African clawed frog).